The sequence spans 234 residues: NLP effector protein 10 (234 aa).

An N-terminal signal peptide occupies residues 1 to 17 (MFKTFIIAAVAVATVRA). The N-linked (GlcNAc...) asparagine glycan is linked to Asn65. Positions 101 to 111 (AIMYSWYFPKD) match the Conserved undecapeptide motif I motif. The short motif at 118–124 (GHRHDWE) is the Hepta-peptide GHRHDWE motif II element.

Belongs to the Necrosis inducing protein (NPP1) family.

It localises to the secreted. Functionally, secreted effector that contributes moderately to virulence during infection by P.capsici. Does not cause visible reaction of C.annuum for several days after inoculation, but by 7 days after inoculation, small necrotic lesions become visible. Leads only to chlorotic areas, without necrosis at 7 days after non-host N.benthamiana leaves infection. In Phytophthora capsici, this protein is NLP effector protein 10.